The chain runs to 1146 residues: MLNVNANSLIYPFSGQITDIRKNQFIPTSKFINTVINEPIFLTKQKVRTKPGTSHAPRKILEVNPSWNNTFFNWNTALRNPSTVLPSFIYERTESSTSKKSHDQETNQVLINAEILNRKLPQFIKQKFGYIDKRKGGYVNQFGFWALLYSEFCLKLNVPIEYYISMLNLKTQDNNIFLREYNEVEYALRYLVRFDELIYTNGKGRKFIKLPSSGKLDFSVDVEEIENVIGCDLHYWTLWPLSNTYTVQGSGILNHGNIVRGICEFTNELVAAHYYPTYFYEHYLYFEDVSNLIKHQIYNVIRTYKAQLKLQDNLGTNRLERRGYYLTMFCPFFEKYKYSVVDQFGELYLYLNMFGALPFDSADSKSIPKTYNDFDIYYQDRFKNFKDFGYVTYNTTIPNEYKRRNLGPYQLFFTYQQMFDLIQTISTNVNLMYNFKILGFNMMDISNINEIDTNVTSVCRNIEYPLGPSLHLNNLEAIPPNLLELANNVTMQFNSNFLSPYSMYTLPLMRSSAERLIQEDGLRLAVFRLSTAHRKQLKTLQKQVLDPKVLFDRFIRPNLIRCQIPKFEFLFWITYCVDEFPMYTISSTGDLDVTPLTSSDEKRKSSVTNNSSFKLLCMAFQFLSEFGIREIVKPNSVLFLGAKNEPVGDMLRRLSHGLWSVQRVGADAEYPSKKANINNVNLKNTYDLVISDMDQSTGTTVEAISALCVSQLKKCIECFNRRLVFKIQYGLFHTLCAIRDCLIECGQDYAGQNLYFNMKIVRSCWSKVGSMELFLILDKTKTEHELYTVDQLRAVVNSFGFSETNTVFYTYMGTPSRYQLNDLNCKIFSVDVTVNEFSDVLSTFMNLSNCVSYGALKNEAYVDTLTIFGATNIQRIGLFMRNKQIYKSLALDGKDHRPEGIFDPRKCFVIPGAREVLILSDAQRMKAWKILKKMHFDRAVLDTSLTIYDIGCRDFECAYLAVMDEDTILPYVGIDKSTILDVKRNLTIERREVNRTELYRLATLGHVFVYNSYFMDFPTRAKLEEELNYLYDNLVLKGVMLMSFYCLHDELLPVLKDHGFVDISSKDVKENKFSFGRYHGFGTVDYNFMLEWLTKMSQKFEVHTVILSASDISFSCVMHGNAINLDSIYFAPIFNMVQPCFLIKNK.

This is an uncharacterized protein from Saccharum officinarum (Sugarcane).